Consider the following 593-residue polypeptide: Tyrosine-protein phosphatase non-receptor type 9 (593 aa).

Met-1 bears the N-acetylmethionine mark. The disordered stretch occupies residues 1–21; the sequence is MEPATAPRPDMAPELTPEEEQ. One can recognise a CRAL-TRIO domain in the interval 84–243; it reads EEPLRSEILS…NLGGYIKIDL (160 aa). The region spanning 303–574 is the Tyrosine-protein phosphatase domain; it reads IYEEYEDIRR…YFCYKAILEF (272 aa). Substrate is bound by residues Asp-470, 515-521, and Gln-559; that span reads CSAGIGR. The active-site Phosphocysteine intermediate is Cys-515.

It belongs to the protein-tyrosine phosphatase family. Non-receptor class 3 subfamily.

It is found in the cytoplasm. It carries out the reaction O-phospho-L-tyrosyl-[protein] + H2O = L-tyrosyl-[protein] + phosphate. In terms of biological role, protein-tyrosine phosphatase that could participate in the transfer of hydrophobic ligands or in functions of the Golgi apparatus. This is Tyrosine-protein phosphatase non-receptor type 9 (Ptpn9) from Rattus norvegicus (Rat).